The sequence spans 131 residues: D-ribose pyranase (131 aa).

The active-site Proton donor is the H20. Substrate-binding positions include D28, H98, and 120–122 (YAN).

This sequence belongs to the RbsD / FucU family. RbsD subfamily. In terms of assembly, homodecamer.

It localises to the cytoplasm. The catalysed reaction is beta-D-ribopyranose = beta-D-ribofuranose. It functions in the pathway carbohydrate metabolism; D-ribose degradation; D-ribose 5-phosphate from beta-D-ribopyranose: step 1/2. Its function is as follows. Catalyzes the interconversion of beta-pyran and beta-furan forms of D-ribose. This chain is D-ribose pyranase, found in Bacillus mycoides (strain KBAB4) (Bacillus weihenstephanensis).